Here is a 443-residue protein sequence, read N- to C-terminus: Nuclear hormone receptor family member nhr-60 (443 aa).

Positions 1–20 are enriched in low complexity; the sequence is MIQSSSSISQDSLDLPSILS. Residues 1-40 are disordered; it reads MIQSSSSISQDSLDLPSILSTFSADEPEDEPSPTAVKSTK. A DNA-binding region (nuclear receptor) is located at residues 44–121; the sequence is PTECLICGNS…VGMNPLAMEV (78 aa). 2 NR C4-type zinc fingers span residues 47–67 and 83–104; these read CLICGNSANGHHYDVASCNGC and CKAKGDCFDLTKRKVPLKCRAC. The NR LBD domain occupies 196 to 439; sequence NEFSGLEYLL…KDLVMRVIED (244 aa). The interval 225-249 is disordered; that stretch reads LRRDQLGPPRLPKPPSPGKPRDSQH. Residues 233 to 242 are compositionally biased toward pro residues; sequence PRLPKPPSPG.

Belongs to the nuclear hormone receptor family.

Its subcellular location is the nucleus. Orphan nuclear receptor (Potential). Required for embryonic and larval morphogenesis and probably for seam cell positioning and migration. This is Nuclear hormone receptor family member nhr-60 from Caenorhabditis elegans.